Consider the following 140-residue polypeptide: Large-conductance mechanosensitive channel (140 aa).

Transmembrane regions (helical) follow at residues 16-36 (VIDLAVGVVIGAAFGKIVTAL) and 84-104 (INTVVQFVIIAFAIFLLVKLI).

This sequence belongs to the MscL family. In terms of assembly, homopentamer.

It is found in the cell inner membrane. Functionally, channel that opens in response to stretch forces in the membrane lipid bilayer. May participate in the regulation of osmotic pressure changes within the cell. The protein is Large-conductance mechanosensitive channel of Xanthomonas oryzae pv. oryzae (strain MAFF 311018).